The sequence spans 248 residues: PF03932 family protein CutC (248 aa).

Belongs to the CutC family.

Its subcellular location is the cytoplasm. The chain is PF03932 family protein CutC from Photorhabdus laumondii subsp. laumondii (strain DSM 15139 / CIP 105565 / TT01) (Photorhabdus luminescens subsp. laumondii).